Here is a 331-residue protein sequence, read N- to C-terminus: 5'-AMP-activated protein kinase subunit gamma-1 (331 aa).

Residues 1–12 (METVISSDSSPA) show a composition bias toward polar residues. Positions 1–26 (METVISSDSSPAVENEHPQETPESNN) are disordered. CBS domains lie at 43 to 103 (PTSS…KSAL), 125 to 187 (SFKP…PKPE), and 198 to 260 (IGTY…NLDV). Residues Arg70, 85–90 (MLTITD), Val130, 151–152 (HR), and Lys170 contribute to the ADP site. AMP contacts are provided by residues Arg70, 85–90 (MLTITD), Val130, His151, 151–152 (HR), Lys170, Thr200, Ala205, 226–227 (SA), and 242–245 (SKFD). ATP contacts are provided by residues Arg70, 85-90 (MLTITD), Val130, 151-152 (HR), Arg152, and Lys170. Residues 138-159 (LFDAVSSLIRNKIHRLPVIDPE) carry the AMPK pseudosubstrate motif. Residue 242–245 (SKFD) participates in ADP binding. An ATP-binding site is contributed by 242-245 (SKFD). The residue at position 261 (Ser261) is a Phosphoserine; by ULK1. Thr263 carries the phosphothreonine; by ULK1 modification. Arg269 serves as a coordination point for ADP. Arg269 lines the AMP pocket. Arg269 is an ATP binding site. At Ser270 the chain carries Phosphoserine; by ULK1. The 58-residue stretch at 272 to 329 (YFEGVLKCYLHETLETIINRLVEAEVHRLVVVDENDVVKGIVSLSDILQALVLTGGEK) folds into the CBS 4 domain. Residues Leu277 and 298–299 (HR) each bind ADP. Residues Leu277, His298, 298-299 (HR), and 314-317 (SLSD) contribute to the AMP site. Residues Leu277 and 298-299 (HR) contribute to the ATP site.

The protein belongs to the 5'-AMP-activated protein kinase gamma subunit family. As to quaternary structure, AMPK is a heterotrimer of an alpha catalytic subunit (PRKAA1 or PRKAA2), a beta (PRKAB1 or PRKAB2) and a gamma non-catalytic subunits (PRKAG1, PRKAG2 or PRKAG3). Interacts with FNIP1 and FNIP2. In terms of processing, phosphorylated by ULK1 and ULK2; leading to negatively regulate AMPK activity and suggesting the existence of a regulatory feedback loop between ULK1, ULK2 and AMPK. Glycosylated; O-GlcNAcylated by OGT, promoting the AMP-activated protein kinase (AMPK) activity.

Functionally, AMP/ATP-binding subunit of AMP-activated protein kinase (AMPK), an energy sensor protein kinase that plays a key role in regulating cellular energy metabolism. In response to reduction of intracellular ATP levels, AMPK activates energy-producing pathways and inhibits energy-consuming processes: inhibits protein, carbohydrate and lipid biosynthesis, as well as cell growth and proliferation. AMPK acts via direct phosphorylation of metabolic enzymes, and by longer-term effects via phosphorylation of transcription regulators. Also acts as a regulator of cellular polarity by remodeling the actin cytoskeleton; probably by indirectly activating myosin. Gamma non-catalytic subunit mediates binding to AMP, ADP and ATP, leading to activate or inhibit AMPK: AMP-binding results in allosteric activation of alpha catalytic subunit (PRKAA1 or PRKAA2) both by inducing phosphorylation and preventing dephosphorylation of catalytic subunits. ADP also stimulates phosphorylation, without stimulating already phosphorylated catalytic subunit. ATP promotes dephosphorylation of catalytic subunit, rendering the AMPK enzyme inactive. This is 5'-AMP-activated protein kinase subunit gamma-1 (PRKAG1) from Homo sapiens (Human).